A 293-amino-acid chain; its full sequence is Ribosomal RNA small subunit methyltransferase H (293 aa).

S-adenosyl-L-methionine-binding positions include 32–34 (GGH), Asp-51, Phe-78, Asp-99, and Gln-106. A disordered region spans residues 272–293 (SDEEIKENPASRSAKLRVGRRI).

It belongs to the methyltransferase superfamily. RsmH family.

It is found in the cytoplasm. The catalysed reaction is cytidine(1402) in 16S rRNA + S-adenosyl-L-methionine = N(4)-methylcytidine(1402) in 16S rRNA + S-adenosyl-L-homocysteine + H(+). Functionally, specifically methylates the N4 position of cytidine in position 1402 (C1402) of 16S rRNA. In Sulfurihydrogenibium sp. (strain YO3AOP1), this protein is Ribosomal RNA small subunit methyltransferase H.